The sequence spans 459 residues: Probable PTS system sucrose-specific EIIBC component (459 aa).

Residues 1–86 form the PTS EIIB type-1 domain; that stretch reads MHKEIAKELL…VHVWETAPSE (86 aa). Residue Cys-25 is the Phosphocysteine intermediate; for EIIB activity of the active site. Residues 106-459 form the PTS EIIC type-1 domain; sequence KTLSDIFVPI…LFLGFKEETE (354 aa). Helical transmembrane passes span 111-131, 147-167, 177-197, 209-229, 245-265, 288-308, 329-349, 360-380, 388-408, 412-432, and 434-454; these read IFVP…LIGM, MLDL…GFSA, LGAV…SMLG, LHIP…SVFV, LDVV…ALIV, AGIA…LSGL, FLVP…LAVF, IALP…VFGV, FIGA…VQVV, YGLT…ANFV, and YMIG…FLGF.

The protein localises to the cell membrane. In terms of biological role, the phosphoenolpyruvate-dependent sugar phosphotransferase system (sugar PTS), a major carbohydrate active -transport system, catalyzes the phosphorylation of incoming sugar substrates concomitantly with their translocation across the cell membrane. This system may be involved in sucrose transport. The EIIB domain is mainly phosphorylated by the EIIA domains of GamP and PtsA/YpqE. Functionally, negatively regulates SacY activity by catalyzing its phosphorylation on 'His-99'. In Bacillus subtilis (strain 168), this protein is Probable PTS system sucrose-specific EIIBC component (sacX).